A 206-amino-acid chain; its full sequence is Pyridoxine/pyridoxamine 5'-phosphate oxidase (206 aa).

FMN is bound by residues 53 to 58 (RMVLLK), 68 to 69 (YT), Lys75, and Gln97. Lys58 contributes to the substrate binding site. Residues Tyr115, Arg119, and Ser123 each contribute to the substrate site. FMN is bound by residues 132-133 (QS) and Trp177. 183–185 (RLH) is a binding site for substrate. FMN is bound at residue Arg187.

It belongs to the pyridoxamine 5'-phosphate oxidase family. Homodimer. FMN serves as cofactor.

The catalysed reaction is pyridoxamine 5'-phosphate + O2 + H2O = pyridoxal 5'-phosphate + H2O2 + NH4(+). The enzyme catalyses pyridoxine 5'-phosphate + O2 = pyridoxal 5'-phosphate + H2O2. Its pathway is cofactor metabolism; pyridoxal 5'-phosphate salvage; pyridoxal 5'-phosphate from pyridoxamine 5'-phosphate: step 1/1. It participates in cofactor metabolism; pyridoxal 5'-phosphate salvage; pyridoxal 5'-phosphate from pyridoxine 5'-phosphate: step 1/1. Its function is as follows. Catalyzes the oxidation of either pyridoxine 5'-phosphate (PNP) or pyridoxamine 5'-phosphate (PMP) into pyridoxal 5'-phosphate (PLP). In Rhizobium leguminosarum bv. trifolii (strain WSM2304), this protein is Pyridoxine/pyridoxamine 5'-phosphate oxidase.